The following is a 577-amino-acid chain: Sensory neuron membrane protein 2 (577 aa).

Residues 1–6 are Cytoplasmic-facing; that stretch reads MVQCTL. The chain crosses the membrane as a helical span at residues 7–27; that stretch reads IWAGIGAMMAVSGALLGWVVF. Residues 28–519 lie on the Extracellular side of the membrane; the sequence is PRAVHEKVIE…LMKVLSLLDV (492 aa). Asn-66, Asn-161, Asn-271, and Asn-307 each carry an N-linked (GlcNAc...) asparagine glycan. 3 disulfide bridges follow: Cys-316–Cys-384, Cys-345–Cys-411, and Cys-386–Cys-400. A helical transmembrane segment spans residues 520–540; it reads VQWVLIGVGLLLAVLMPTVYF. The Cytoplasmic portion of the chain corresponds to 541–577; it reads VKRCRGEGSRTVSPAVTATTSAASLSTVAGVTGDRSK.

Belongs to the CD36 family.

It is found in the cell membrane. Plays an olfactory role that is not restricted to pheromone sensitivity. This chain is Sensory neuron membrane protein 2, found in Anopheles gambiae (African malaria mosquito).